The following is a 249-amino-acid chain: Triosephosphate isomerase (249 aa).

Substrate is bound at residue asparagine 9–lysine 11. Histidine 94 functions as the Electrophile in the catalytic mechanism. The active-site Proton acceptor is glutamate 166. Substrate contacts are provided by residues glycine 172, serine 212, and glycine 233–glycine 234.

The protein belongs to the triosephosphate isomerase family. Homodimer.

Its subcellular location is the cytoplasm. It catalyses the reaction D-glyceraldehyde 3-phosphate = dihydroxyacetone phosphate. It participates in carbohydrate biosynthesis; gluconeogenesis. Its pathway is carbohydrate degradation; glycolysis; D-glyceraldehyde 3-phosphate from glycerone phosphate: step 1/1. Involved in the gluconeogenesis. Catalyzes stereospecifically the conversion of dihydroxyacetone phosphate (DHAP) to D-glyceraldehyde-3-phosphate (G3P). The polypeptide is Triosephosphate isomerase (Treponema pallidum (strain Nichols)).